The sequence spans 527 residues: Tyrosine-protein kinase TXK (527 aa).

The interval 35-79 (DEELPEKYTQRRRPWLSQLSNKKQSNTGRVQPSKRKPLPPLPPSE) is disordered. Residues 51 to 64 (SQLSNKKQSNTGRV) are compositionally biased toward polar residues. A Nuclear localization signal motif is present at residues 68-73 (KRKPLP). The SH3 domain maps to 82–142 (EEKIQVKALY…PSNYVTENKI (61 aa)). Phosphotyrosine; by autocatalysis is present on Tyr-91. In terms of domain architecture, SH2 spans 150 to 246 (WYHRNITRNQ…GLMTRLRYPV (97 aa)). Positions 271 to 527 (LAFIKEIGSG…RAVTEIAETW (257 aa)) constitute a Protein kinase domain. ATP is bound by residues 277–285 (IGSGQFGVV) and Lys-299. Asp-390 functions as the Proton acceptor in the catalytic mechanism. Tyr-420 is subject to Phosphotyrosine; by FYN and autocatalysis.

It belongs to the protein kinase superfamily. Tyr protein kinase family. TEC subfamily. As to quaternary structure, interacts with PARP1 and EEF1A1. Interacts with SH2D2A. Interacts with FYN. In terms of processing, phosphorylated at Tyr-420 by FYN. Autophosphorylation at Tyr-91 is critical for the activation of TXK, leading to the up-regulation of IFN-gamma gene transcription. The cysteine string at the N-terminus is palmitoylated and required for the proper subcellular location. Expressed in T-cells and some myeloid cell lines. Expressed in Th1/Th0 cells with IFN-gamma-producing potential.

It localises to the cytoplasm. The protein localises to the nucleus. The protein resides in the cell membrane. The enzyme catalyses L-tyrosyl-[protein] + ATP = O-phospho-L-tyrosyl-[protein] + ADP + H(+). Activated by phosphorylation by FYN. Functionally, non-receptor tyrosine kinase that plays a redundant role with ITK in regulation of the adaptive immune response. Regulates the development, function and differentiation of conventional T-cells and nonconventional NKT-cells. When antigen presenting cells (APC) activate T-cell receptor (TCR), a series of phosphorylation leads to the recruitment of TXK to the cell membrane, where it is phosphorylated at Tyr-420. Phosphorylation leads to TXK full activation. Also contributes to signaling from many receptors and participates in multiple downstream pathways, including regulation of the actin cytoskeleton. Like ITK, can phosphorylate PLCG1, leading to its localization in lipid rafts and activation, followed by subsequent cleavage of its substrates. In turn, the endoplasmic reticulum releases calcium in the cytoplasm and the nuclear activator of activated T-cells (NFAT) translocates into the nucleus to perform its transcriptional duty. Plays a role in the positive regulation of IFNG transcription in T-helper 1 cells as part of an IFNG promoter-binding complex with PARP1 and EEF1A1. Within the complex, phosphorylates both PARP1 and EEF1A1. Also phosphorylates key sites in LCP2 leading to the up-regulation of Th1 preferred cytokine IL-2. Phosphorylates 'Tyr-201' of CTLA4 which leads to the association of PI-3 kinase with the CTLA4 receptor. This is Tyrosine-protein kinase TXK (TXK) from Homo sapiens (Human).